The primary structure comprises 699 residues: Elongation factor G (699 aa).

A tr-type G domain is found at 8–283 (EHIRNIGICA…AVVDFLPSPI (276 aa)). GTP-binding positions include 17–24 (AHIDAGKT), 81–85 (DTPGH), and 135–138 (NKMD).

It belongs to the TRAFAC class translation factor GTPase superfamily. Classic translation factor GTPase family. EF-G/EF-2 subfamily.

Its subcellular location is the cytoplasm. Its function is as follows. Catalyzes the GTP-dependent ribosomal translocation step during translation elongation. During this step, the ribosome changes from the pre-translocational (PRE) to the post-translocational (POST) state as the newly formed A-site-bound peptidyl-tRNA and P-site-bound deacylated tRNA move to the P and E sites, respectively. Catalyzes the coordinated movement of the two tRNA molecules, the mRNA and conformational changes in the ribosome. The sequence is that of Elongation factor G from Rickettsia rickettsii (strain Iowa).